The sequence spans 518 residues: Glutamate--cysteine ligase (518 aa).

The protein belongs to the glutamate--cysteine ligase type 1 family. Type 1 subfamily.

It catalyses the reaction L-cysteine + L-glutamate + ATP = gamma-L-glutamyl-L-cysteine + ADP + phosphate + H(+). It functions in the pathway sulfur metabolism; glutathione biosynthesis; glutathione from L-cysteine and L-glutamate: step 1/2. The protein is Glutamate--cysteine ligase of Escherichia coli O139:H28 (strain E24377A / ETEC).